Consider the following 104-residue polypeptide: ATP-dependent Clp protease adapter protein ClpS (104 aa).

It belongs to the ClpS family. In terms of assembly, binds to the N-terminal domain of the chaperone ClpA.

Its function is as follows. Involved in the modulation of the specificity of the ClpAP-mediated ATP-dependent protein degradation. The polypeptide is ATP-dependent Clp protease adapter protein ClpS (Burkholderia thailandensis (strain ATCC 700388 / DSM 13276 / CCUG 48851 / CIP 106301 / E264)).